Consider the following 333-residue polypeptide: 4-hydroxyproline epimerase (333 aa).

Cys90 serves as the catalytic Proton acceptor. Substrate contacts are provided by residues 91 to 92 (GH) and Asp249. Cys253 (proton donor) is an active-site residue. 254–255 (GT) contributes to the substrate binding site.

The protein belongs to the proline racemase family. Homodimer.

It catalyses the reaction trans-4-hydroxy-L-proline = cis-4-hydroxy-D-proline. Inhibited by iodoacetate, iodoacetamide and by high amounts (10 mM) of pyrrole-2-carboxylic acid (PYC). Not inhibited by PYC at 1 mM. In terms of biological role, allows intracellular utilization of 4-hydroxyproline, one of the major constituents of host collagen, by converting 4-hydroxy-L-proline to 4-hydroxy-D-proline, which can be further metabolized by intracellular 4-hydroxy-D-proline oxidases. Strong B-cell mitogen. Plays an important role in the regulation of intra- and extracellular amino acid pools, allowing the bacterium to profit from host precursors and enzymatic pathways. This Brucella melitensis biotype 1 (strain ATCC 23456 / CCUG 17765 / NCTC 10094 / 16M) protein is 4-hydroxyproline epimerase.